Here is a 396-residue protein sequence, read N- to C-terminus: Maltose/maltodextrin-binding periplasmic protein (396 aa).

The first 26 residues, methionine 1–alanine 26, serve as a signal peptide directing secretion.

Belongs to the bacterial solute-binding protein 1 family. The complex is composed of two ATP-binding proteins (MalK), two transmembrane proteins (MalG and MalF) and a solute-binding protein (MalE).

It localises to the periplasm. In terms of biological role, part of the ABC transporter complex MalEFGK involved in maltose/maltodextrin import. Binds maltose and higher maltodextrins. The sequence is that of Maltose/maltodextrin-binding periplasmic protein (malE) from Salmonella typhimurium (strain LT2 / SGSC1412 / ATCC 700720).